The primary structure comprises 248 residues: uncharacterized protein (248 aa).

Position 9–33 (I9–V33) interacts with NADP(+). Residue S141 coordinates substrate. Residue Y154 is the Proton acceptor of the active site.

It belongs to the short-chain dehydrogenases/reductases (SDR) family.

This is an uncharacterized protein from Listeria monocytogenes serovar 1/2a (strain ATCC BAA-679 / EGD-e).